The primary structure comprises 281 residues: MFLKDIHQFFLGFVITNTIIVIIGQINLQFKNSYNIVSGLKVQQLDSIKYYCKVLTHDSSCLFFRNCLAVIDSIIVNIDEYLSLSPFKRREKFLQDVESLNNPSVPARLFINPKKDFILIHRKGVSLKIRSTFQMYSIYKFNVSVSKNAAIFNTLRPSDFISFLEYYSDMNINEILINVLNNYGLNDISLFLVKKIFYLFDSDKIFFNEFIGVDSVPLEYFLLFLSKKYIIRARKESPLKIYTDFEDFYIHGSFKNILKMQQQKIKQNLGFKTKSNFFTGI.

It localises to the plastid. The protein resides in the chloroplast. This is an uncharacterized protein from Euglena gracilis.